The chain runs to 647 residues: S-adenosyl-L-methionine-dependent tRNA 4-demethylwyosine synthase (647 aa).

The region spanning 50–198 (GKIFFISQTG…AFQDWCDGVI (149 aa)) is the Flavodoxin-like domain. Residues 56-60 (SQTGT) and 142-174 (VFGVGSRAYGESYNAVAKELSSRMIGLGGLEMI) contribute to the FMN site. Residues 316 to 559 (YGIESHRCME…LSLKSNGEYE (244 aa)) enclose the Radical SAM core domain. [4Fe-4S] cluster contacts are provided by Cys332, Cys336, and Cys339.

Belongs to the TYW1 family. It depends on [4Fe-4S] cluster as a cofactor.

The catalysed reaction is N(1)-methylguanosine(37) in tRNA(Phe) + pyruvate + S-adenosyl-L-methionine = 4-demethylwyosine(37) in tRNA(Phe) + 5'-deoxyadenosine + L-methionine + CO2 + H2O. It participates in tRNA modification; wybutosine-tRNA(Phe) biosynthesis. In terms of biological role, probable component of the wybutosine biosynthesis pathway. Wybutosine is a hyper modified guanosine with a tricyclic base found at the 3'-position adjacent to the anticodon of eukaryotic phenylalanine tRNA. Catalyzes the condensation of N-methylguanine with 2 carbon atoms from pyruvate to form the tricyclic 4-demethylwyosine, an intermediate in wybutosine biosynthesis. This is S-adenosyl-L-methionine-dependent tRNA 4-demethylwyosine synthase (TYW1) from Arabidopsis thaliana (Mouse-ear cress).